The chain runs to 192 residues: Charged multivesicular body protein 1 (192 aa).

Coiled-coil stretches lie at residues 7-35 (QLKFTSKQLEKQSKKSEQSEKAQKIKLKK) and 102-125 (NMDLEKITQVMDQFERQFEDLDVQ). Positions 164–192 (QMGSAPSEKVQQGETDELTERLNRLKQKN) are disordered.

This sequence belongs to the SNF7 family. As to quaternary structure, probable peripherally associated component of the endosomal sorting required for transport complex III (ESCRT-III).

The protein resides in the endosome membrane. Probable peripherally associated component of the endosomal sorting required for transport complex III (ESCRT-III) which is involved in multivesicular bodies (MVBs) formation and sorting of endosomal cargo proteins into MVBs. MVBs contain intraluminal vesicles (ILVs) that are generated by invagination and scission from the limiting membrane of the endosome and are delivered to lysosomes enabling degradation of membrane proteins. This is Charged multivesicular body protein 1 (chmp1) from Dictyostelium discoideum (Social amoeba).